A 280-amino-acid chain; its full sequence is Putative pyruvate, phosphate dikinase regulatory protein (280 aa).

ADP is bound at residue 147–154; sequence GASRSSKT.

Belongs to the pyruvate, phosphate/water dikinase regulatory protein family. PDRP subfamily.

It carries out the reaction N(tele)-phospho-L-histidyl/L-threonyl-[pyruvate, phosphate dikinase] + ADP = N(tele)-phospho-L-histidyl/O-phospho-L-threonyl-[pyruvate, phosphate dikinase] + AMP + H(+). The catalysed reaction is N(tele)-phospho-L-histidyl/O-phospho-L-threonyl-[pyruvate, phosphate dikinase] + phosphate + H(+) = N(tele)-phospho-L-histidyl/L-threonyl-[pyruvate, phosphate dikinase] + diphosphate. Functionally, bifunctional serine/threonine kinase and phosphorylase involved in the regulation of the pyruvate, phosphate dikinase (PPDK) by catalyzing its phosphorylation/dephosphorylation. In Pelobacter propionicus (strain DSM 2379 / NBRC 103807 / OttBd1), this protein is Putative pyruvate, phosphate dikinase regulatory protein.